A 577-amino-acid polypeptide reads, in one-letter code: Mitochondrial-processing peptidase subunit alpha (577 aa).

The N-terminal 35 residues, Met1–Thr35, are a transit peptide targeting the mitochondrion. Residues Ser259–Leu301 are disordered. Positions Ser269–Leu301 are enriched in low complexity.

The protein belongs to the peptidase M16 family. In terms of assembly, heterodimer of mpp (alpha) and pep (beta) subunits, forming the mitochondrial processing protease (MPP) in which mpp is involved in substrate recognition and binding and pep is the catalytic subunit.

Its subcellular location is the mitochondrion matrix. Substrate recognition and binding subunit of the essential mitochondrial processing protease (MPP), which cleaves the mitochondrial sequence off newly imported precursors proteins. The chain is Mitochondrial-processing peptidase subunit alpha from Neurospora crassa (strain ATCC 24698 / 74-OR23-1A / CBS 708.71 / DSM 1257 / FGSC 987).